Here is an 891-residue protein sequence, read N- to C-terminus: Iron-regulated surface determinant protein H (891 aa).

The N-terminal stretch at 1-40 (MNKHHPKLRSFYSIRKSTLGVASVIVSTLFLITSQHQAQA) is a signal peptide. Residues 42–77 (ENTNTSDKISENQNNNATTTQQPKDTNQTQPATQPV) form a disordered region. Over residues 53–63 (NQNNNATTTQQ) the composition is skewed to low complexity. Positions 64 to 77 (PKDTNQTQPATQPV) are enriched in polar residues. An NEAT 1 domain is found at 105-232 (DIGPREQVNF…IYNDPSLVKS (128 aa)). The interval 239–324 (VTNDQSSSDA…NQSDVNQQYP (86 aa)) is disordered. A compositionally biased stretch (low complexity) spans 240–276 (TNDQSSSDASNQTNTNTSNQNTSTTNNANNQPQATTN). A compositionally biased stretch (polar residues) spans 277 to 323 (MSQPAQPKSSANADQASSQPAHETNSNGNTNDKTNESSNQSDVNQQY). 2 NEAT domains span residues 345–471 (TADN…DYVD) and 543–660 (QLTD…TKDD). Disordered regions lie at residues 657 to 718 (TKDD…DADN), 752 to 777 (IAKD…KDSN), and 835 to 864 (TVKT…GETT). Polar residues-rich tracts occupy residues 663-677 (SQNN…QTGQ) and 687-697 (AENSSTATNPK). The segment covering 698-718 (DASDKADVIEPESDVVKDADN) has biased composition (basic and acidic residues). Residues 835 to 850 (TVKTKEKAGTPSKENK) are compositionally biased toward basic and acidic residues. Positions 851–864 (LSQSKMLPKTGETT) are enriched in polar residues. An LPXTG sorting signal motif is present at residues 857 to 861 (LPKTG). The residue at position 860 (Thr860) is a Pentaglycyl murein peptidoglycan amidated threonine. Residues 861–891 (GETTSSQSWWGLYALLGMLALFIPKFRKESK) constitute a propeptide, removed by sortase.

This sequence belongs to the IsdH family.

It localises to the secreted. The protein resides in the cell wall. Binds human plasma haptoglobin-hemoglobin complexes, haptoglobin and hemoglobin. Binds haptoglobin-hemoglobin complexes with significantly higher affinity than haptoglobin alone. This is Iron-regulated surface determinant protein H (isdH) from Staphylococcus aureus (strain Mu50 / ATCC 700699).